The sequence spans 642 residues: Kinesin-like protein KIF12 (642 aa).

Positions 1–13 (MEERGSPDGDPAR) are enriched in basic and acidic residues. The disordered stretch occupies residues 1–25 (MEERGSPDGDPARNLEQGPEGSETP). Ser6 bears the Phosphoserine mark. A Kinesin motor domain is found at 25 to 360 (PIQVVLRVRP…LRYASRAQRI (336 aa)). 104–111 (GQTGSGKT) is an ATP binding site. The residue at position 369 (Ser369) is a Phosphoserine. Residues 376-465 (QQVENELLRL…QVHDLERRLL (90 aa)) are a coiled coil. Disordered stretches follow at residues 531-561 (GHIS…SQSD) and 579-642 (PSAP…LSSC). Pro residues predominate over residues 538–548 (WPPPWAPPPSP). A compositionally biased stretch (polar residues) spans 610–642 (TLTQQINSSLHLSQRQPQPSEDTQSPGQGLSSC). Residue Ser634 is modified to Phosphoserine.

The protein belongs to the TRAFAC class myosin-kinesin ATPase superfamily. Kinesin family. As to expression, expressed in the liver.

It is found in the cytoplasm. The protein localises to the cytoskeleton. This is Kinesin-like protein KIF12 (Kif12) from Mus musculus (Mouse).